Consider the following 385-residue polypeptide: Mannitol-1-phosphate 5-dehydrogenase (385 aa).

Position 3–14 (3–14 (AVHFGAGNIGRG)) interacts with NAD(+).

The protein belongs to the mannitol dehydrogenase family.

The catalysed reaction is D-mannitol 1-phosphate + NAD(+) = beta-D-fructose 6-phosphate + NADH + H(+). This is Mannitol-1-phosphate 5-dehydrogenase from Geobacillus thermodenitrificans (strain NG80-2).